The chain runs to 70 residues: Putative peptide YY-3 (70 aa).

An N-terminal signal peptide occupies residues 1-23 (MVSVCRPWPAVAIALLALLVCLG).

This sequence belongs to the NPY family.

It is found in the secreted. This is Putative peptide YY-3 (PYY3) from Homo sapiens (Human).